Here is a 292-residue protein sequence, read N- to C-terminus: MNGIINLKKEAGMTSHDAVFKLRKILGTKKIGHGGTLDPDVVGVLPIAVGKATRMVEFMQDEGKIYEGEITLGYSTKTEDASGEVVAETPVLSLLDEKLVDEAIASLTGPITQIPPMYSAVKVNGRKLYEYARAGQEVERPERQVTIYQFERTSPISYDGQLARFTFRVKCSKGTYIRTLSVDLGEKLGYAAHMSHLTRTSAAGLQLEDALALEEIAEKVEAGQLDFLHPLEIGTGDLVKVFLSPEEATEVRFGRFIELDQTDKELAAFEDDKLLAILEKRGNLYKPRKVFS.

The Nucleophile role is filled by aspartate 38.

Belongs to the pseudouridine synthase TruB family. Type 1 subfamily.

It carries out the reaction uridine(55) in tRNA = pseudouridine(55) in tRNA. Responsible for synthesis of pseudouridine from uracil-55 in the psi GC loop of transfer RNAs. In Streptococcus pneumoniae serotype 4 (strain ATCC BAA-334 / TIGR4), this protein is tRNA pseudouridine synthase B.